The primary structure comprises 577 residues: Arginine--tRNA ligase (577 aa).

The 'HIGH' region signature appears at 122–132; sequence PNVAKEMHVGH.

The protein belongs to the class-I aminoacyl-tRNA synthetase family. Monomer.

It is found in the cytoplasm. The enzyme catalyses tRNA(Arg) + L-arginine + ATP = L-arginyl-tRNA(Arg) + AMP + diphosphate. The polypeptide is Arginine--tRNA ligase (Escherichia fergusonii (strain ATCC 35469 / DSM 13698 / CCUG 18766 / IAM 14443 / JCM 21226 / LMG 7866 / NBRC 102419 / NCTC 12128 / CDC 0568-73)).